The chain runs to 579 residues: Zinc metalloproteinase nas-11 (579 aa).

Residues 1–17 form the signal peptide; that stretch reads MTPSLVFLIVVIVVVEG. The propeptide occupies 18 to 328; that stretch reads QGWRPWDRFN…AAPGSSRLKK (311 aa). The tract at residues 35–58 is disordered; it reads WGGNNWGTRQRNQEPHDIPPPVPP. Residue Asn256 is glycosylated (N-linked (GlcNAc...) asparagine). The span at 293 to 312 shows a compositional bias: acidic residues; it reads GDDEIPLPDADTDDEDDDDS. The segment at 293–323 is disordered; sequence GDDEIPLPDADTDDEDDDDSTNSASGAAPGS. The region spanning 329 to 536 is the Peptidase M12A domain; it reads SALYFEGNLI…IELLKKMYCQ (208 aa). 5 disulfide bridges follow: Cys375–Cys535, Cys401–Cys421, Cys539–Cys575, Cys546–Cys568, and Cys555–Cys572. His430 is a binding site for Zn(2+). Glu431 is an active-site residue. His434 and His440 together coordinate Zn(2+). N-linked (GlcNAc...) asparagine glycosylation is present at Asn454. Residues 539–575 enclose the ShKT domain; sequence CDDKNVYCGAWALKDLCKNPGHDQYMAANCKKSCGLC.

Zn(2+) is required as a cofactor. As to expression, expressed in the anterior part of the intestine, CEP neurons and to a lesser extent in hypodermis.

It is found in the secreted. In terms of biological role, metalloprotease. This Caenorhabditis elegans protein is Zinc metalloproteinase nas-11 (nas-11).